We begin with the raw amino-acid sequence, 493 residues long: Glycylpeptide N-tetradecanoyltransferase (493 aa).

A disordered region spans residues 1–30 (MSDSKDSKGKAPQKPNDAEQTPGGKLTPQA). Residues 82–85 (FKFW), 216–218 (LCI), and 224–228 (SKRLA) each bind tetradecanoyl-CoA. L493 serves as the catalytic Proton acceptor; via carboxylate.

The protein belongs to the NMT family. Monomer.

Its subcellular location is the cytoplasm. It carries out the reaction N-terminal glycyl-[protein] + tetradecanoyl-CoA = N-tetradecanoylglycyl-[protein] + CoA + H(+). Functionally, adds a myristoyl group to the N-terminal glycine residue of certain cellular proteins. The sequence is that of Glycylpeptide N-tetradecanoyltransferase (swoF) from Emericella nidulans (strain FGSC A4 / ATCC 38163 / CBS 112.46 / NRRL 194 / M139) (Aspergillus nidulans).